The following is a 728-amino-acid chain: Catalase-peroxidase (728 aa).

Residues 1 to 26 (MDNPTDTAGKCPVAHGNKPRGPSNRD) form a disordered region. Residues 96 to 218 (WHSAGTYRIT…LGAVQMGLIY (123 aa)) constitute a cross-link (tryptophyl-tyrosyl-methioninium (Trp-Tyr) (with M-244)). Residue His97 is the Proton acceptor of the active site. Positions 218-244 (YVNPEGPNGNPDPVAAARDIRETFARM) form a cross-link, tryptophyl-tyrosyl-methioninium (Tyr-Met) (with W-96). His259 contacts heme b.

This sequence belongs to the peroxidase family. Peroxidase/catalase subfamily. Homodimer or homotetramer. Heme b serves as cofactor. Post-translationally, formation of the three residue Trp-Tyr-Met cross-link is important for the catalase, but not the peroxidase activity of the enzyme.

The enzyme catalyses H2O2 + AH2 = A + 2 H2O. The catalysed reaction is 2 H2O2 = O2 + 2 H2O. Its function is as follows. Bifunctional enzyme with both catalase and broad-spectrum peroxidase activity. Important for stationary phase survival. The polypeptide is Catalase-peroxidase (Rhizobium etli (strain ATCC 51251 / DSM 11541 / JCM 21823 / NBRC 15573 / CFN 42)).